Reading from the N-terminus, the 1277-residue chain is Y' element ATP-dependent helicase YEL077C (1277 aa).

In terms of domain architecture, Helicase ATP-binding spans 222–399 (EIYMADTPSV…LQRIGLTGLA (178 aa)). 235-242 (APPGYGKT) contacts ATP. Positions 345–348 (DEFH) match the DEAH box motif. The 152-residue stretch at 454 to 605 (ALKLLLALFE…EFYGLESKKG (152 aa)) folds into the Helicase C-terminal domain. 2 disordered regions span residues 696–763 (NVRT…NATT) and 775–895 (TTKS…NRFH). Positions 775–878 (TTKSINSSTN…ATTTESTNAS (104 aa)) are enriched in low complexity. A compositionally biased stretch (basic and acidic residues) spans 879–895 (AKEDANKDGNAEDNRFH).

The protein belongs to the helicase family. Yeast subtelomeric Y' repeat subfamily.

Its function is as follows. Catalyzes DNA unwinding and is involved in telomerase-independent telomere maintenance. This Saccharomyces cerevisiae (strain ATCC 204508 / S288c) (Baker's yeast) protein is Y' element ATP-dependent helicase YEL077C.